The following is a 159-amino-acid chain: MKKLAIMAAASMIFTVGSAQATFQASGTTGITTLTVTEECRVQVGNVTATLARSKLKDDTAIGVIGVTALGCNGLQAALQADPDNYDATNLYMTSRNHDKLNVKLKATDGSSWTYGNGVFYKTEGGNWGGHVGISVDGNQTDKPTGEYTLNLTGGYWTN.

The N-terminal stretch at 1–21 (MKKLAIMAAASMIFTVGSAQA) is a signal peptide.

This sequence belongs to the Dr-adhesin family.

It localises to the fimbrium. In terms of biological role, hemagglutinins of uropathogenic E.coli mediate adherence to the upper urinary tract. These adhesins bind to the Dr blood group antigen and also agglutinate human erythrocytes in the presence of D-mannose (mannose-resistant hemagglutination (MRHA)). C1845 is a strain responsible for diarrheal disease. In Escherichia coli, this protein is F1845 fimbrial protein (daaE).